A 706-amino-acid chain; its full sequence is uncharacterized protein (706 aa).

3 coiled-coil regions span residues 86–162 (TKNV…AKKI), 269–299 (DYLKDVEKSIEQLSDNYEQYLSNIDIFVNEL), and 337–427 (DDYI…QSDY).

This is an uncharacterized protein from Staphylococcus aureus (strain MRSA252).